The following is a 227-amino-acid chain: 2,3-bisphosphoglycerate-dependent phosphoglycerate mutase (227 aa).

Substrate-binding positions include 7–14 (RHGQSEWN), 20–21 (TG), Arg-59, 86–89 (ERHY), Lys-97, 113–114 (RR), and 182–183 (GN). His-8 acts as the Tele-phosphohistidine intermediate in catalysis. Glu-86 acts as the Proton donor/acceptor in catalysis.

Belongs to the phosphoglycerate mutase family. BPG-dependent PGAM subfamily. As to quaternary structure, homodimer.

It catalyses the reaction (2R)-2-phosphoglycerate = (2R)-3-phosphoglycerate. Its pathway is carbohydrate degradation; glycolysis; pyruvate from D-glyceraldehyde 3-phosphate: step 3/5. Its function is as follows. Catalyzes the interconversion of 2-phosphoglycerate and 3-phosphoglycerate. This chain is 2,3-bisphosphoglycerate-dependent phosphoglycerate mutase, found in Neisseria meningitidis serogroup C (strain 053442).